The chain runs to 397 residues: Transcription factor TGAL6 (397 aa).

The 45-residue stretch at 104–148 (PDKVLRRLAQNREAARKSRLRKKAYIQQLETSRLKLAQLEQELQR) folds into the bZIP domain. The tract at residues 106–126 (KVLRRLAQNREAARKSRLRKK) is basic motif. A leucine-zipper region spans residues 132–146 (LETSRLKLAQLEQEL). The region spanning 175-390 (ALGFEIKYSH…RALSSLWAAR (216 aa)) is the DOG1 domain.

It belongs to the bZIP family.

It is found in the nucleus. Functionally, transcriptional regulator involved in defense response. The sequence is that of Transcription factor TGAL6 from Oryza sativa subsp. japonica (Rice).